Here is a 54-residue protein sequence, read N- to C-terminus: uncharacterized protein (54 aa).

This is an uncharacterized protein from Escherichia coli (strain K12).